A 1017-amino-acid chain; its full sequence is MDLIRGVLLRLLLLASSLGPGAVSLRAAIRKPGKVGPPLDIKLGALNCTAFSIQWKMPRHPGSPILGYTVFYSEVGADKSLQEQLHSVPLSRDIPTTEEVIGDLKPGTEYRVSIAAYSQAGKGRLSSPRHVTTLSQDSCLPPAAPQQPHVIVVSDSEVALSWKPGASEGSAPIQYYSVEFIRPDFDKKWTSIHERIQMDSMVIKGLDPDTNYQFAVRAMNSHGPSPRSWPSDIIRTLCPEEAGSGRYGPRYITDMGAGEDDEGFEDDLDLDISFEEVKPLPATKGGNKKFLVESKKMSISNPKTISRLIPPTSASLPVTTVAPQPIPIQRKGKNGVAIMSRLFDMPCDETLCSADSFCVNDYTWGGSRCQCTLGKGGESCSEDIVIQYPQFFGHSYVTFEPLKNSYQAFQITLEFRAEAEDGLLLYCGENEHGRGDFMSLAIIRRSLQFRFNCGTGVAIIVSETKIKLGGWHTVMLYRDGLNGLLQLNNGTPVTGQSQGQYSKITFRTPLYLGGAPSAYWLVRATGTNRGFQGCVQSLAVNGRRIDMRPWPLGKALSGADVGECSSGICDEASCIHGGTCTAIKADSYICLCPLGFKGRHCEDAFTLTIPQFRESLRSYAATPWPLEPQHYLSFMEFEITFRPDSGDGVLLYSYDTGSKDFLSINLAGGHVEFRFDCGSGTGVLRSEDPLTLGNWHELRVSRTAKNGILQVDKQKIVEGMAEGGFTQIKCNTDIFIGGVPNYDDVKKNSGVLKPFSGSIQKIILNDRTIHVKHDFTSGVNVENAAHPCVRAPCAHGGSCRPRKEGYDCDCPLGFEGLHCQKECGNYCLNTIIEAIEIPQFIGRSYLTYDNPDILKRVSGSRSNVFMRFKTTAKDGLLLWRGDSPMRPNSDFISLGLRDGALVFSYNLGSGVASIMVNGSFNDGRWHRVKAVRDGQSGKITVDDYGARTGKSPGMMRQLNINGALYVGGMKEIALHTNRQYMRGLVGCISHFTLSTDYHISLVEDAVDGKNINTCGAK.

The N-terminal stretch at 1 to 24 is a signal peptide; the sequence is MDLIRGVLLRLLLLASSLGPGAVS. Fibronectin type-III domains follow at residues 37–136 and 144–239; these read PPLD…TLSQ and APQQ…TLCP. The N-linked (GlcNAc...) asparagine glycan is linked to Asn-47. One can recognise an EGF-like 1 domain in the interval 343-381; that stretch reads FDMPCDETLCSADSFCVNDYTWGGSRCQCTLGKGGESCS. Intrachain disulfides connect Cys-347/Cys-358, Cys-352/Cys-369, Cys-371/Cys-380, Cys-534/Cys-564, Cys-569/Cys-580, Cys-574/Cys-590, Cys-592/Cys-601, Cys-788/Cys-799, Cys-793/Cys-808, Cys-810/Cys-819, and Cys-987/Cys-1014. Positions 386–564 constitute a Laminin G-like 1 domain; sequence IQYPQFFGHS…ALSGADVGEC (179 aa). EGF-like domains are found at residues 565-602 and 784-820; these read SSGI…RHCE and AAHP…LHCQ. One can recognise a Laminin G-like 2 domain in the interval 609–788; that stretch reads IPQFRESLRS…VNVENAAHPC (180 aa). Residues 835–1014 enclose the Laminin G-like 3 domain; it reads IEIPQFIGRS…AVDGKNINTC (180 aa).

Interacts with DAG1 alpha-dystroglycan. Interacts with GPR158 and GPR179; transsynaptic interaction is required for synaptic organization of photoreceptor cells. Post-translationally, O-glycosylated; contains chondroitin sulfate and heparan sulfate.

The protein localises to the secreted. It is found in the extracellular space. It localises to the extracellular matrix. The protein resides in the synaptic cleft. Its subcellular location is the presynaptic active zone. Involved in both the retinal photoreceptor ribbon synapse formation and physiological functions of visual perception. Plays a key role in the synaptic organization of photoreceptors by mediating transsynaptic interaction between alpha-dystroglycan and GPR179 on the postsynaptic membrane. Necessary for proper bipolar dendritic tip apposition to the photoreceptor ribbon synapse. Promotes matrix assembly and cell adhesiveness. In Homo sapiens (Human), this protein is Pikachurin (EGFLAM).